The sequence spans 430 residues: MKVHIFTYGCQMNENDSEIVKQLLKDEGIELTDDENDADVVILNTCAVRKKSEEKVYSHIGKLRKKGKKIGIMGCVAEKEKENLFKRGVSFVIGTRALTKVPDAVLNAKNGNKQIYLEDTLDEIEYHKVETRSSNHHAWVTIIHGCDRFCTYCIVPYTRGREKSRPIDEVLKEVESLSQRGYKEFTFLGQNVDAYGKDLRDGTSLAKLLKLASQIDNVKRLWFLTSYPTDFSLEIPKVMLESEKVARSIHLPVQHGSDKILKAMNRRYTRQEYIDLINEIRKIVPDASISSDIIVGFPGENDEDFEATVELVKLLKFERLNLAVYSPREGTVAWKYLKDDVPYQVKVRRMSYLLNLQKTINKELNKSYLGKEVEVIVEAQAKNGLFYGRDIRNKIISFEANPESIGKNVIVKVNKISAGPLYGEIKKILD.

The MTTase N-terminal domain maps to 1-110 (MKVHIFTYGC…VPDAVLNAKN (110 aa)). Residues C10, C46, C75, C146, C150, and C153 each contribute to the [4Fe-4S] cluster site. The Radical SAM core domain occupies 132-363 (RSSNHHAWVT…LNLQKTINKE (232 aa)). One can recognise a TRAM domain in the interval 366-427 (KSYLGKEVEV…AGPLYGEIKK (62 aa)).

It belongs to the methylthiotransferase family. MiaB subfamily. As to quaternary structure, monomer. [4Fe-4S] cluster serves as cofactor.

The protein localises to the cytoplasm. The enzyme catalyses N(6)-dimethylallyladenosine(37) in tRNA + (sulfur carrier)-SH + AH2 + 2 S-adenosyl-L-methionine = 2-methylsulfanyl-N(6)-dimethylallyladenosine(37) in tRNA + (sulfur carrier)-H + 5'-deoxyadenosine + L-methionine + A + S-adenosyl-L-homocysteine + 2 H(+). Catalyzes the methylthiolation of N6-(dimethylallyl)adenosine (i(6)A), leading to the formation of 2-methylthio-N6-(dimethylallyl)adenosine (ms(2)i(6)A) at position 37 in tRNAs that read codons beginning with uridine. In Fervidobacterium nodosum (strain ATCC 35602 / DSM 5306 / Rt17-B1), this protein is tRNA-2-methylthio-N(6)-dimethylallyladenosine synthase.